The sequence spans 726 residues: Probable cyclic nucleotide-gated ion channel 14 (726 aa).

At 1-86 (MEFKRDNTVR…GDAVLQWNRV (86 aa)) the chain is on the cytoplasmic side. Residues 87-107 (FLFWCLVALYVDPLFFFLSSV) form a helical membrane-spanning segment. The Extracellular segment spans residues 108–122 (KRIGRSSCMTTDLKL). Residues 123–143 (GIVITFFRTLADLFYVLHIVI) form a helical membrane-spanning segment. At 144 to 177 (KFRTAYVSRTSRVFGRGELVKDPKLIARRYLRSD) the chain is on the cytoplasmic side. The helical transmembrane segment at 178 to 198 (FIVDLIACLPLPQIVSWFILP) threads the bilayer. The Extracellular portion of the chain corresponds to 199 to 211 (SIRSSHSDHTTNA). The chain crosses the membrane as a helical span at residues 212 to 232 (LVLIVLVQYIPRLYLIFPLSA). At 233–252 (EIIKATGVVTTTAWAGAAYN) the chain is on the cytoplasmic side. Residues 253 to 273 (LLQYMLASHILGSAWYLLSIE) traverse the membrane as a helical segment. The Extracellular segment spans residues 274–377 (RQATCWKAEC…LSTSTSVLET (104 aa)). A helical membrane pass occupies residues 378–398 (MFAILVAIFGLVLFALLIGNM). The Cytoplasmic segment spans residues 399-726 (QTYLQSITVR…PDEPDFSVDD (328 aa)). A nucleoside 3',5'-cyclic phosphate contacts are provided by residues 481–605 (LFAQ…SKKL) and E552. Residues 597-612 (FRRLHSKKLQHTFRYY) are calmodulin-binding. The IQ domain maps to 617–646 (RTWAACFVQVAWRRYKRKKLAKSLSLAESF). The disordered stretch occupies residues 707–726 (KDVEIPMLPKPDEPDFSVDD).

This sequence belongs to the cyclic nucleotide-gated cation channel (TC 1.A.1.5) family. In terms of assembly, homotetramer or heterotetramer.

It is found in the cell membrane. Its function is as follows. Probable cyclic nucleotide-gated ion channel. In Arabidopsis thaliana (Mouse-ear cress), this protein is Probable cyclic nucleotide-gated ion channel 14 (CNGC14).